Here is a 940-residue protein sequence, read N- to C-terminus: Translation initiation factor IF-2 (940 aa).

2 stretches are compositionally biased toward low complexity: residues 138–147 and 161–208; these read APVEVVAEPE and PVVV…ITEL. The tract at residues 138–354 is disordered; sequence APVEVVAEPE…DRQTFQAPTE (217 aa). 2 stretches are compositionally biased toward basic and acidic residues: residues 214-271 and 289-311; these read IAAR…EEAA and AKAD…DGAK. Positions 440 to 609 constitute a tr-type G domain; that stretch reads PRAPVVTVMG…LLQAEVLELT (170 aa). Residues 449–456 form a G1 region; sequence GHVDHGKT. 449-456 is a binding site for GTP; that stretch reads GHVDHGKT. A G2 region spans residues 474–478; sequence GITQH. The interval 495-498 is G3; that stretch reads DTPG. GTP-binding positions include 495–499 and 549–552; these read DTPGH and TKID. Residues 549–552 form a G4 region; the sequence is TKID. Positions 585-587 are G5; sequence SAK.

This sequence belongs to the TRAFAC class translation factor GTPase superfamily. Classic translation factor GTPase family. IF-2 subfamily.

It localises to the cytoplasm. Its function is as follows. One of the essential components for the initiation of protein synthesis. Protects formylmethionyl-tRNA from spontaneous hydrolysis and promotes its binding to the 30S ribosomal subunits. Also involved in the hydrolysis of GTP during the formation of the 70S ribosomal complex. The protein is Translation initiation factor IF-2 of Azoarcus sp. (strain BH72).